We begin with the raw amino-acid sequence, 396 residues long: Coiled-coil domain-containing protein 1 (396 aa).

The N-terminal stretch at 1–21 is a signal peptide; sequence MAARSALCFLAIITLFVYACG. 4 coiled-coil regions span residues 53–73, 109–129, 208–242, and 287–308; these read KIDSKLDSILSELQKEQNDRD, EVEKIEEAVDDVIDMIDDIID, DKESKKIDETVQELLDEIKDVVEDANDDVNDILDT, and YEEIEEKMDEVDDFIDDAIDEH. Positions 231–256 are enriched in acidic residues; it reads DANDDVNDILDTDDEDEDEDVQEEKD. Disordered regions lie at residues 231 to 260 and 288 to 378; these read DANDDVNDILDTDDEDEDEDVQEEKDEDIH and EEIE…VADD.

Component of the acid-insoluble and acid-soluble organic matrix of calcified layers of the shell (at protein level).

The protein localises to the secreted. This is Coiled-coil domain-containing protein 1 from Lottia gigantea (Giant owl limpet).